The chain runs to 133 residues: Small ribosomal subunit protein uS8 (133 aa).

The protein belongs to the universal ribosomal protein uS8 family. As to quaternary structure, part of the 30S ribosomal subunit. Contacts proteins S5 and S12.

In terms of biological role, one of the primary rRNA binding proteins, it binds directly to 16S rRNA central domain where it helps coordinate assembly of the platform of the 30S subunit. The sequence is that of Small ribosomal subunit protein uS8 from Acaryochloris marina (strain MBIC 11017).